The chain runs to 173 residues: Large ribosomal subunit protein uL16 (173 aa).

This sequence belongs to the universal ribosomal protein uL16 family.

The chain is Large ribosomal subunit protein uL16 from Methanosarcina acetivorans (strain ATCC 35395 / DSM 2834 / JCM 12185 / C2A).